We begin with the raw amino-acid sequence, 150 residues long: Large ribosomal subunit protein bL9 (150 aa).

Belongs to the bacterial ribosomal protein bL9 family.

Its function is as follows. Binds to the 23S rRNA. The polypeptide is Large ribosomal subunit protein bL9 (Saccharopolyspora erythraea (strain ATCC 11635 / DSM 40517 / JCM 4748 / NBRC 13426 / NCIMB 8594 / NRRL 2338)).